The primary structure comprises 569 residues: Cationic amino acid transporter 9, chloroplastic (569 aa).

The transit peptide at 1 to 41 (MGGHEGFSNQRLSSATWFSHFRASALRSKSLPPPSSQTAVR) directs the protein to the chloroplast. The next 14 helical transmembrane spans lie at 53-73 (GLFD…VFVV), 81-101 (AGPG…LNAL), 113-135 (VVGG…LVFV), 155-175 (YAVA…LWMG), 181-201 (LGGL…LTLV), 215-235 (VMTA…AFEI), 250-270 (AVLT…AVAN), 284-304 (IGIM…CLVL), 333-353 (ILIS…GLYV), 406-428 (HILS…ALRL), 444-464 (WQEG…AGVF), 467-487 (FSAS…ASAV), 502-522 (FSCP…IFLF), and 528-548 (EAWI…ALYG).

It belongs to the amino acid-polyamine-organocation (APC) superfamily. Cationic amino acid transporter (CAT) (TC 2.A.3.3) family. In terms of tissue distribution, expressed in roots, stems, flowers, and leaves.

It localises to the plastid. The protein localises to the chloroplast membrane. Functionally, permease involved in the transport of the cationic amino acids. This is Cationic amino acid transporter 9, chloroplastic (CAT9) from Arabidopsis thaliana (Mouse-ear cress).